The primary structure comprises 265 residues: Mlc titration factor A (265 aa).

Positions 111, 148, 152, and 211 each coordinate Zn(2+).

The protein belongs to the MtfA family. As to quaternary structure, interacts with Mlc. The cofactor is Zn(2+).

The protein localises to the cytoplasm. Its function is as follows. Involved in the modulation of the activity of the glucose-phosphotransferase system (glucose-PTS). Interacts with the transcriptional repressor Mlc, preventing its interaction with DNA and leading to the modulation of expression of genes regulated by Mlc, including ptsG, which encodes the PTS system glucose-specific EIICB component. Functionally, shows zinc-dependent metallopeptidase activity. This Escherichia coli O9:H4 (strain HS) protein is Mlc titration factor A.